Consider the following 359-residue polypeptide: GATA-binding factor 1-A (359 aa).

Residues 1 to 21 form a disordered region; the sequence is MDYTTLTTQDPDPNYTESGLA. 2 consecutive GATA-type zinc fingers follow at residues 178–202 and 232–256; these read CVNC…CNAC and CSNC…CNAC. 2 disordered regions span residues 271 to 311 and 323 to 359; these read MKKE…SPYP and PMGH…VTPP. Over residues 279–291 the composition is skewed to basic residues; that stretch reads RNRKVSSRSKKKK.

As to expression, expressed in the developing ventral blood island, and in both tadpole and adult erythrocytes.

It localises to the nucleus. In terms of biological role, transcription factor that acts synergistically with tal1/scl and lmo2 to specify embryonic dorsal mesoderm to a hematopoietic fate. The polypeptide is GATA-binding factor 1-A (gata1-a) (Xenopus laevis (African clawed frog)).